Consider the following 69-residue polypeptide: UPF0270 protein VCM66_2532 (69 aa).

It belongs to the UPF0270 family.

The chain is UPF0270 protein VCM66_2532 from Vibrio cholerae serotype O1 (strain M66-2).